The following is a 927-amino-acid chain: DNA mismatch repair protein MutS (927 aa).

Residues 44-80 (DESLKRPRNRHKPTSVPSIPLDSESQEQLETADNDND) form a disordered region. The span at 67-79 (ESQEQLETADNDN) shows a compositional bias: acidic residues. ATP is bound at residue 725-732 (GPNASGKS).

The protein belongs to the DNA mismatch repair MutS family.

This protein is involved in the repair of mismatches in DNA. It is possible that it carries out the mismatch recognition step. This protein has a weak ATPase activity. The sequence is that of DNA mismatch repair protein MutS from Prochlorococcus marinus (strain MIT 9303).